Here is a 209-residue protein sequence, read N- to C-terminus: Ribonuclease HII (209 aa).

Residues 7–198 (GPVAGVDEAG…VAKAHQEWLH (192 aa)) enclose the RNase H type-2 domain. A divalent metal cation-binding residues include Asp13, Glu14, and Asp107.

Belongs to the RNase HII family. The cofactor is Mn(2+). Requires Mg(2+) as cofactor.

It localises to the cytoplasm. The catalysed reaction is Endonucleolytic cleavage to 5'-phosphomonoester.. In terms of biological role, endonuclease that specifically degrades the RNA of RNA-DNA hybrids. This chain is Ribonuclease HII, found in Corynebacterium glutamicum (strain ATCC 13032 / DSM 20300 / JCM 1318 / BCRC 11384 / CCUG 27702 / LMG 3730 / NBRC 12168 / NCIMB 10025 / NRRL B-2784 / 534).